Consider the following 191-residue polypeptide: Adenine phosphoribosyltransferase (191 aa).

The protein belongs to the purine/pyrimidine phosphoribosyltransferase family. Homodimer.

It localises to the cytoplasm. It carries out the reaction AMP + diphosphate = 5-phospho-alpha-D-ribose 1-diphosphate + adenine. Its pathway is purine metabolism; AMP biosynthesis via salvage pathway; AMP from adenine: step 1/1. In terms of biological role, catalyzes a salvage reaction resulting in the formation of AMP, that is energically less costly than de novo synthesis. This chain is Adenine phosphoribosyltransferase, found in Clavibacter sepedonicus (Clavibacter michiganensis subsp. sepedonicus).